A 216-amino-acid chain; its full sequence is Holliday junction branch migration complex subunit RuvA (216 aa).

Residues 1-64 (MISFIKGVLI…EDAQQLYGFK (64 aa)) form a domain I region. The domain II stretch occupies residues 65–143 (SKVDKKVFQE…KMANEIYAQT (79 aa)). The segment at 144 to 163 (SGTTTTSQDSQAQQAPTSVV) is flexible linker. The segment at 164 to 216 (LANSIFNESVDALLALGYKQKDAEKMARSAMGDATTAAEVIRKALQGSIKSKR) is domain III.

This sequence belongs to the RuvA family. As to quaternary structure, homotetramer. Forms an RuvA(8)-RuvB(12)-Holliday junction (HJ) complex. HJ DNA is sandwiched between 2 RuvA tetramers; dsDNA enters through RuvA and exits via RuvB. An RuvB hexamer assembles on each DNA strand where it exits the tetramer. Each RuvB hexamer is contacted by two RuvA subunits (via domain III) on 2 adjacent RuvB subunits; this complex drives branch migration. In the full resolvosome a probable DNA-RuvA(4)-RuvB(12)-RuvC(2) complex forms which resolves the HJ.

Its subcellular location is the cytoplasm. Its function is as follows. The RuvA-RuvB-RuvC complex processes Holliday junction (HJ) DNA during genetic recombination and DNA repair, while the RuvA-RuvB complex plays an important role in the rescue of blocked DNA replication forks via replication fork reversal (RFR). RuvA specifically binds to HJ cruciform DNA, conferring on it an open structure. The RuvB hexamer acts as an ATP-dependent pump, pulling dsDNA into and through the RuvAB complex. HJ branch migration allows RuvC to scan DNA until it finds its consensus sequence, where it cleaves and resolves the cruciform DNA. This is Holliday junction branch migration complex subunit RuvA from Francisella tularensis subsp. tularensis (strain WY96-3418).